The primary structure comprises 473 residues: Fumarate hydratase class II 2 (473 aa).

The segment at 1-28 is disordered; that stretch reads MAKSARTKTARPATRTETDSFGPIEVPS. Substrate-binding positions include 108-110, 139-142, 149-151, and T197; these read SGT, HPND, and SSN. The Proton donor/acceptor role is filled by H198. Residue S328 is part of the active site. Residues S329 and 334 to 336 contribute to the substrate site; that span reads KVN.

It belongs to the class-II fumarase/aspartase family. Fumarase subfamily. In terms of assembly, homotetramer.

It localises to the cytoplasm. The catalysed reaction is (S)-malate = fumarate + H2O. It functions in the pathway carbohydrate metabolism; tricarboxylic acid cycle; (S)-malate from fumarate: step 1/1. In terms of biological role, involved in the TCA cycle. Catalyzes the stereospecific interconversion of fumarate to L-malate. This Bradyrhizobium diazoefficiens (strain JCM 10833 / BCRC 13528 / IAM 13628 / NBRC 14792 / USDA 110) protein is Fumarate hydratase class II 2.